Reading from the N-terminus, the 169-residue chain is ATP synthase subunit b, sodium ion specific (169 aa).

Residues 5–27 (SFISLDWGVVFQIVNTIVMYLIL) traverse the membrane as a helical segment.

It belongs to the ATPase B chain family. F-type ATPases have 2 components, F(1) - the catalytic core - and F(0) - the membrane proton channel. F(1) has five subunits: alpha(3), beta(3), gamma(1), delta(1), epsilon(1). F(0) has three main subunits: a(1), b(2) and c(10-14). The alpha and beta chains form an alternating ring which encloses part of the gamma chain. F(1) is attached to F(0) by a central stalk formed by the gamma and epsilon chains, while a peripheral stalk is formed by the delta and b chains.

It localises to the cell membrane. Functionally, f(1)F(0) ATP synthase produces ATP from ADP in the presence of a proton or sodium gradient. F-type ATPases consist of two structural domains, F(1) containing the extramembraneous catalytic core and F(0) containing the membrane proton channel, linked together by a central stalk and a peripheral stalk. During catalysis, ATP synthesis in the catalytic domain of F(1) is coupled via a rotary mechanism of the central stalk subunits to proton translocation. Its function is as follows. Component of the F(0) channel, it forms part of the peripheral stalk, linking F(1) to F(0). In this organism this enzyme may function as an ATP-driven Na(+) ion pump to generate a Na(+) ion electrochemical gradient rather than as an ATP synthase. This is ATP synthase subunit b, sodium ion specific (atpF) from Clostridium paradoxum.